Reading from the N-terminus, the 311-residue chain is Dermonecrotic toxin LlSicTox-alphaIII1i (311 aa).

Positions 1–21 (MYAHLALILGCWTVVLQGAET) are cleaved as a signal peptide. A propeptide spanning residues 22 to 26 (DVGER) is cleaved from the precursor. The active site involves His38. Glu58 and Asp60 together coordinate Mg(2+). The Nucleophile role is filled by His73. Residues Cys77 and Cys83 are joined by a disulfide bond. Asp117 contributes to the Mg(2+) binding site.

The protein belongs to the arthropod phospholipase D family. Class I subfamily. The cofactor is Mg(2+). As to expression, expressed by the venom gland.

The protein resides in the secreted. It catalyses the reaction an N-(acyl)-sphingosylphosphocholine = an N-(acyl)-sphingosyl-1,3-cyclic phosphate + choline. The enzyme catalyses an N-(acyl)-sphingosylphosphoethanolamine = an N-(acyl)-sphingosyl-1,3-cyclic phosphate + ethanolamine. The catalysed reaction is a 1-acyl-sn-glycero-3-phosphocholine = a 1-acyl-sn-glycero-2,3-cyclic phosphate + choline. It carries out the reaction a 1-acyl-sn-glycero-3-phosphoethanolamine = a 1-acyl-sn-glycero-2,3-cyclic phosphate + ethanolamine. Functionally, dermonecrotic toxins cleave the phosphodiester linkage between the phosphate and headgroup of certain phospholipids (sphingolipid and lysolipid substrates), forming an alcohol (often choline) and a cyclic phosphate. This toxin acts on sphingomyelin (SM) with high activity. It also act on acyl- and alkyl-lysophosphatidylcholine (LPC), but not on sphingosylphosphorylcholine (SPC) and phosphatidylcholine (PC). It may also act on ceramide phosphoethanolamine (CPE), and lysophosphatidylethanolamine (LPE), but not on lysophosphatidylserine (LPS), and lysophosphatidylglycerol (LPG). It acts by transphosphatidylation, releasing exclusively cyclic phosphate products as second products. Induces complement-dependent hemolysis and dermonecrosis. Also induces increased vascular permeability, edema, inflammatory response, and platelet aggregation. The protein is Dermonecrotic toxin LlSicTox-alphaIII1i of Loxosceles laeta (South American recluse spider).